The following is a 284-amino-acid chain: 4-diphosphocytidyl-2-C-methyl-D-erythritol kinase (284 aa).

K14 is an active-site residue. ATP is bound at residue 98 to 108; that stretch reads PMGGGLGGGSS. D140 is a catalytic residue.

It belongs to the GHMP kinase family. IspE subfamily.

The catalysed reaction is 4-CDP-2-C-methyl-D-erythritol + ATP = 4-CDP-2-C-methyl-D-erythritol 2-phosphate + ADP + H(+). The protein operates within isoprenoid biosynthesis; isopentenyl diphosphate biosynthesis via DXP pathway; isopentenyl diphosphate from 1-deoxy-D-xylulose 5-phosphate: step 3/6. Its function is as follows. Catalyzes the phosphorylation of the position 2 hydroxy group of 4-diphosphocytidyl-2C-methyl-D-erythritol. This is 4-diphosphocytidyl-2-C-methyl-D-erythritol kinase from Shewanella baltica (strain OS223).